The sequence spans 177 residues: Glutamyl-tRNA(Gln) amidotransferase subunit F, mitochondrial (177 aa).

The transit peptide at 1–16 (MIRINSRGLTVSTRRF) directs the protein to the mitochondrion. Residues 148-177 (PAKGETQGSFNVANMNPRNRPFATIRSKQG) are disordered. Residues 153–164 (TQGSFNVANMNP) show a composition bias toward polar residues.

It belongs to the GatF family. Subunit of the heterotrimeric GatFAB amidotransferase (AdT) complex, composed of A, B and F subunits.

It localises to the mitochondrion inner membrane. The catalysed reaction is L-glutamyl-tRNA(Gln) + L-glutamine + ATP + H2O = L-glutaminyl-tRNA(Gln) + L-glutamate + ADP + phosphate + H(+). Its function is as follows. Allows the formation of correctly charged Gln-tRNA(Gln) through the transamidation of misacylated Glu-tRNA(Gln) in the mitochondria. The reaction takes place in the presence of glutamine and ATP through an activated gamma-phospho-Glu-tRNA(Gln). Required for proper protein synthesis within the mitochondrion. This chain is Glutamyl-tRNA(Gln) amidotransferase subunit F, mitochondrial, found in Scheffersomyces stipitis (strain ATCC 58785 / CBS 6054 / NBRC 10063 / NRRL Y-11545) (Yeast).